The primary structure comprises 75 residues: Protein EGO2 (75 aa).

This Saccharomyces cerevisiae (strain ATCC 204508 / S288c) (Baker's yeast) protein is Protein EGO2.